Here is a 786-residue protein sequence, read N- to C-terminus: Wall-associated receptor kinase-like 17 (786 aa).

The first 30 residues, methionine 1–serine 30, serve as a signal peptide directing secretion. Over serine 31–alanine 369 the chain is Extracellular. Asparagine 69, asparagine 122, asparagine 160, asparagine 165, and asparagine 274 each carry an N-linked (GlcNAc...) asparagine glycan. The atypical EGF-like stretch occupies residues cysteine 301–cysteine 362. 3 disulfide bridges follow: cysteine 303–cysteine 318, cysteine 340–cysteine 353, and cysteine 347–cysteine 362. A helical transmembrane segment spans residues isoleucine 370–leucine 390. Topologically, residues arginine 391–tryptophan 786 are cytoplasmic. Threonine 433 bears the Phosphothreonine mark. In terms of domain architecture, Protein kinase spans phenylalanine 444–isoleucine 719. ATP contacts are provided by residues leucine 450–valine 458 and lysine 472. The residue at position 517 (tyrosine 517) is a Phosphotyrosine. Catalysis depends on aspartate 570, which acts as the Proton acceptor. 2 positions are modified to phosphothreonine: threonine 604 and threonine 609. Position 617 is a phosphotyrosine (tyrosine 617). Residues serine 766–serine 775 are compositionally biased toward low complexity. Positions serine 766–tryptophan 786 are disordered.

The protein belongs to the protein kinase superfamily. Ser/Thr protein kinase family.

Its subcellular location is the membrane. It catalyses the reaction L-seryl-[protein] + ATP = O-phospho-L-seryl-[protein] + ADP + H(+). The enzyme catalyses L-threonyl-[protein] + ATP = O-phospho-L-threonyl-[protein] + ADP + H(+). Functionally, serine/threonine-protein kinase that may function as a signaling receptor of extracellular matrix component. This is Wall-associated receptor kinase-like 17 (WAKL17) from Arabidopsis thaliana (Mouse-ear cress).